A 481-amino-acid polypeptide reads, in one-letter code: ATP synthase subunit beta (481 aa).

An ATP-binding site is contributed by 167–174 (GGAGVGKT).

This sequence belongs to the ATPase alpha/beta chains family. F-type ATPases have 2 components, CF(1) - the catalytic core - and CF(0) - the membrane proton channel. CF(1) has five subunits: alpha(3), beta(3), gamma(1), delta(1), epsilon(1). CF(0) has three main subunits: a(1), b(2) and c(9-12). The alpha and beta chains form an alternating ring which encloses part of the gamma chain. CF(1) is attached to CF(0) by a central stalk formed by the gamma and epsilon chains, while a peripheral stalk is formed by the delta and b chains.

It is found in the cell membrane. The enzyme catalyses ATP + H2O + 4 H(+)(in) = ADP + phosphate + 5 H(+)(out). Its function is as follows. Produces ATP from ADP in the presence of a proton gradient across the membrane. The catalytic sites are hosted primarily by the beta subunits. The chain is ATP synthase subunit beta from Corynebacterium jeikeium (strain K411).